Consider the following 461-residue polypeptide: Kynureninase (461 aa).

Residues leucine 114, threonine 115, 142-145 (FPSD), aspartate 228, histidine 231, and tyrosine 253 contribute to the pyridoxal 5'-phosphate site. Lysine 254 is subject to N6-(pyridoxal phosphate)lysine. 2 residues coordinate pyridoxal 5'-phosphate: tryptophan 288 and asparagine 316.

Belongs to the kynureninase family. As to quaternary structure, homodimer. Pyridoxal 5'-phosphate is required as a cofactor.

It localises to the cytoplasm. The enzyme catalyses L-kynurenine + H2O = anthranilate + L-alanine + H(+). It carries out the reaction 3-hydroxy-L-kynurenine + H2O = 3-hydroxyanthranilate + L-alanine + H(+). It participates in amino-acid degradation; L-kynurenine degradation; L-alanine and anthranilate from L-kynurenine: step 1/1. It functions in the pathway cofactor biosynthesis; NAD(+) biosynthesis; quinolinate from L-kynurenine: step 2/3. In terms of biological role, catalyzes the cleavage of L-kynurenine (L-Kyn) and L-3-hydroxykynurenine (L-3OHKyn) into anthranilic acid (AA) and 3-hydroxyanthranilic acid (3-OHAA), respectively. The polypeptide is Kynureninase (Lodderomyces elongisporus (strain ATCC 11503 / CBS 2605 / JCM 1781 / NBRC 1676 / NRRL YB-4239) (Yeast)).